A 124-amino-acid polypeptide reads, in one-letter code: Kinocilin (124 aa).

Helical transmembrane passes span 13–33 and 40–60; these read LQLA…GVSV and VGGI…YPFL. Residues 80–124 form a disordered region; the sequence is PNSGPDHGEGRSSNNSNKEGARSGLSTVTRTLEKLKPGGRGTEEG. Residues 90–109 are compositionally biased toward polar residues; sequence RSSNNSNKEGARSGLSTVTR. A compositionally biased stretch (basic and acidic residues) spans 110 to 124; it reads TLEKLKPGGRGTEEG.

As to expression, preferentially expressed in the inner ear and testis. Localizes mainly in the kinocilium of sensory cells in the inner ear. Also present in the manchette of the spermatids, a transient structure enriched in interconnected microtubules (at protein level).

It is found in the membrane. May play a role in stabilizing dense microtubular networks or in vesicular trafficking. The chain is Kinocilin (Kncn) from Mus musculus (Mouse).